The following is a 286-amino-acid chain: Flagellar filament 31.3 kDa core protein (286 aa).

Belongs to the bacterial flagellin family. The core of the flagellum consists of several antigenically related polypeptides. Glycosylated. Glycosylation is not essential for motility.

It localises to the periplasmic flagellum. Its subcellular location is the periplasm. Its function is as follows. Component of the core of the flagella. This is Flagellar filament 31.3 kDa core protein (flaB2) from Treponema maltophilum.